A 465-amino-acid polypeptide reads, in one-letter code: MTSMASLFSFTSPAVKRLLGWKQGDEEEKWAEKAVDALVKKLKKKKGAMEELEKALSSPGQPSKCVTIPRSLDGRLQVSHRKGLPHVIYCRVWRWPDLQSHHELKPLDICEFPFGSKQKEVCINPYHYKRVESPVLPPVLVPRHNEFNPQHSLLVQFRNLSHNEPHMPQNATFPDSFHQPNNTPFPLSPNSPYPPSPASSTYPNSPASSGPGSPFQLPADTPPPAYMPPDDQMGQDNSQPMDTSNNMIPQIMPSISSRDVQPVAYEEPKHWCSIVYYELNNRVGEAFHASSTSVLVDGFTDPSNNKSRFCLGLLSNVNRNSTIENTRRHIGKGVHLYYVGGEVYAECLSDSSIFVQSRNCNFHHGFHPTTVCKIPSSCSLKIFNNQEFAQLLAQSVNHGFEAVYELTKMCTIRMSFVKGWGAEYHRQDVTSTPCWIEIHLHGPLQWLDKVLTQMGSPLNPISSVS.

Thr2 carries the post-translational modification N-acetylthreonine. Residues 13 to 137 enclose the MH1 domain; it reads PAVKRLLGWK…YKRVESPVLP (125 aa). The Zn(2+) site is built by Cys65, Cys110, Cys122, and His127. The disordered stretch occupies residues 163–249; the sequence is NEPHMPQNAT…PMDTSNNMIP (87 aa). Over residues 169-182 the composition is skewed to polar residues; it reads QNATFPDSFHQPNN. Positions 186–197 are enriched in pro residues; that stretch reads PLSPNSPYPPSP. The span at 198-214 shows a compositional bias: low complexity; sequence ASSTYPNSPASSGPGSP. Polar residues predominate over residues 234–249; that stretch reads GQDNSQPMDTSNNMIP. Residues 271-465 enclose the MH2 domain; sequence WCSIVYYELN…SPLNPISSVS (195 aa). Residues Ser463 and Ser465 each carry the phosphoserine modification.

The protein belongs to the dwarfin/SMAD family. Homodimer. Forms trimers with the co-SMAD SMAD4. Interacts with PEBP2-alpha subunit and SMURF1. Interacts with SUV39H1 and SUV39H2. Interacts (via MH2 domain) with LEMD3. Interacts with WWP1. Interacts with TMEM119. Interacts with ZNF8. Interacts with RANBP3L. Interacts with HK1. Interacts with HGS; this interaction attenuates BMP signaling. Post-translationally, phosphorylated on serine by BMP (bone morphogenetic proteins) type 1 receptor kinase. Ubiquitin-mediated proteolysis by SMAD-specific E3 ubiquitin ligase SMURF1. As to expression, ubiquitous.

Its subcellular location is the cytoplasm. The protein localises to the nucleus. The protein resides in the mitochondrion. Its function is as follows. Transcriptional regulator that plays a role in various cellular processes including embryonic development, cell differentiation, angiogenesis and tissue homeostasis. Upon BMP ligand binding to their receptors at the cell surface, is phosphorylated by activated type I BMP receptors (BMPRIs) and associates with SMAD4 to form a heteromeric complex which translocates into the nucleus acting as transcription factor. In turn, the hetero-trimeric complex recognizes cis-regulatory elements containing Smad Binding Elements (SBEs) to modulate the outcome of the signaling network. Non-phosphorylated SMAD5 has a cytoplasmic role in energy metabolism regulation by promoting mitochondrial respiration and glycolysis in response to cytoplasmic pH changes. Mechanistically, interacts with hexokinase 1/HK1 and thereby accelerates glycolysis. This is Mothers against decapentaplegic homolog 5 (SMAD5) from Homo sapiens (Human).